Here is a 3183-residue protein sequence, read N- to C-terminus: WD repeat- and FYVE domain-containing protein 4 (3183 aa).

The span at 1–15 (MEAEDLSKTEDRPED) shows a compositional bias: basic and acidic residues. Disordered regions lie at residues 1–37 (MEAE…EGQS), 790–811 (AGQE…GKFK), 938–977 (KSLH…QALR), and 1828–1852 (KETT…HAAE). The segment covering 1832–1852 (SESSRNTSSPGASAEASHAAE) has biased composition (low complexity). One can recognise a BEACH-type PH domain in the interval 2383 to 2508 (LDGEKVSQKV…DRSKALKSFS (126 aa)). The region spanning 2525–2819 (NLRKHPGFDR…QIFTKPHPSR (295 aa)) is the BEACH domain. The interval 2812–2836 (FTKPHPSRNTTGKNPGPGKDASTPV) is disordered. WD repeat units follow at residues 2930–2969 (LAAW…GRPR), 2979–3018 (GHTQ…RVAC), 3021–3060 (VHRE…ASIT), 3070–3108 (TCCC…MPVP), and 3150–3183 (KASP…SADG).

Interacts with HSP90AB1. As to expression, highly expressed in immune tissues, especially B lymphocytes.

The protein localises to the early endosome. It localises to the endoplasmic reticulum. Plays a critical role in the regulation of cDC1-mediated cross-presentation of viral and tumor antigens in dendritic cells. Mechanistically, acts near the plasma membrane and interacts with endosomal membranes to promote endosomal-to-cytosol antigen trafficking. Also plays a role in B-cell survival through regulation of autophagy. This chain is WD repeat- and FYVE domain-containing protein 4, found in Mus musculus (Mouse).